The following is a 318-amino-acid chain: Transaldolase (318 aa).

Lys-132 acts as the Schiff-base intermediate with substrate in catalysis.

Belongs to the transaldolase family. Type 1 subfamily. In terms of assembly, homodimer.

It is found in the cytoplasm. It carries out the reaction D-sedoheptulose 7-phosphate + D-glyceraldehyde 3-phosphate = D-erythrose 4-phosphate + beta-D-fructose 6-phosphate. It functions in the pathway carbohydrate degradation; pentose phosphate pathway; D-glyceraldehyde 3-phosphate and beta-D-fructose 6-phosphate from D-ribose 5-phosphate and D-xylulose 5-phosphate (non-oxidative stage): step 2/3. Transaldolase is important for the balance of metabolites in the pentose-phosphate pathway. The polypeptide is Transaldolase (Shewanella baltica (strain OS223)).